A 278-amino-acid polypeptide reads, in one-letter code: BPI fold-containing family A member 1 (278 aa).

Positions 1-19 (MFLVGSLVVLCGLLAHSTA) are cleaved as a signal peptide. 4 Repeat repeats span residues 23–28 (GLPLPL), 30–36 (QGPPLPL), 39–44 (GPPLPL), and 47–52 (GQLLPL). The tract at residues 23–52 (GLPLPLGQGPPLPLNQGPPLPLNQGQLLPL) is 4 X 6 AA repeats of G-[LPQ]-[PL]-L-P-L. Residues 112–117 (LVGGLL) are important for surfactant activity and antibacterial properties. Residues N182 and N228 are each glycosylated (N-linked (GlcNAc...) asparagine). Residues C204 and C246 are joined by a disulfide bond.

It belongs to the BPI/LBP/Plunc superfamily. Plunc family. As to quaternary structure, monomer. Interacts (via N-terminus) with SCNN1B, a subunit of the heterotrimeric epithelial sodium channel (ENaC); this inhibits proteolytic activation of ENaC. In terms of tissue distribution, detected in airway epithelia (trachea and lung) and in bronchoalveolar fluid (at protein level). Upper airways, nasopharyngeal epithelium and thymus. Highest expression in the trachea and progressive decrease from proximal (bronchial) to distal (bronchiolar) airways. No expression is detected in the terminal bronchioles, respiratory bronchioles or lung alveoli.

It is found in the secreted. Functionally, lipid-binding protein which shows high specificity for the surfactant phospholipid dipalmitoylphosphatidylcholine (DPPC). Plays a role in the innate immune responses of the upper airways. Reduces the surface tension in secretions from airway epithelia and inhibits the formation of biofilm by pathogenic Gram-negative bacteria, such as P.aeruginosa and K.pneumoniae. Negatively regulates proteolytic cleavage of SCNN1G, an event that is required for activation of the epithelial sodium channel (ENaC), and thereby contributes to airway surface liquid homeostasis and proper clearance of mucus. Plays a role in the airway inflammatory response after exposure to irritants. May attract macrophages and neutrophils. In Mus musculus (Mouse), this protein is BPI fold-containing family A member 1 (Bpifa1).